The chain runs to 620 residues: Proline--tRNA ligase (620 aa).

It belongs to the class-II aminoacyl-tRNA synthetase family. ProS type 1 subfamily. In terms of assembly, homodimer.

It is found in the cytoplasm. It catalyses the reaction tRNA(Pro) + L-proline + ATP = L-prolyl-tRNA(Pro) + AMP + diphosphate. Catalyzes the attachment of proline to tRNA(Pro) in a two-step reaction: proline is first activated by ATP to form Pro-AMP and then transferred to the acceptor end of tRNA(Pro). As ProRS can inadvertently accommodate and process non-cognate amino acids such as alanine and cysteine, to avoid such errors it has two additional distinct editing activities against alanine. One activity is designated as 'pretransfer' editing and involves the tRNA(Pro)-independent hydrolysis of activated Ala-AMP. The other activity is designated 'posttransfer' editing and involves deacylation of mischarged Ala-tRNA(Pro). The misacylated Cys-tRNA(Pro) is not edited by ProRS. The polypeptide is Proline--tRNA ligase (Streptococcus thermophilus (strain ATCC BAA-491 / LMD-9)).